Reading from the N-terminus, the 366-residue chain is tRNA(Met) cytidine acetate ligase (366 aa).

Residues 7–20 (IAEF…HQYL), glycine 96, asparagine 152, and arginine 175 each bind ATP.

The protein belongs to the TmcAL family.

It localises to the cytoplasm. It carries out the reaction cytidine(34) in elongator tRNA(Met) + acetate + ATP = N(4)-acetylcytidine(34) in elongator tRNA(Met) + AMP + diphosphate. Functionally, catalyzes the formation of N(4)-acetylcytidine (ac(4)C) at the wobble position of elongator tRNA(Met), using acetate and ATP as substrates. First activates an acetate ion to form acetyladenylate (Ac-AMP) and then transfers the acetyl group to tRNA to form ac(4)C34. This Streptococcus equi subsp. zooepidemicus (strain MGCS10565) protein is tRNA(Met) cytidine acetate ligase.